The following is a 297-amino-acid chain: Large ribosomal subunit protein uL18 (297 aa).

This sequence belongs to the universal ribosomal protein uL18 family. Component of the large ribosomal subunit (LSU).

It localises to the cytoplasm. It is found in the nucleus. Functionally, component of the ribosome, a large ribonucleoprotein complex responsible for the synthesis of proteins in the cell. The small ribosomal subunit (SSU) binds messenger RNAs (mRNAs) and translates the encoded message by selecting cognate aminoacyl-transfer RNA (tRNA) molecules. The large subunit (LSU) contains the ribosomal catalytic site termed the peptidyl transferase center (PTC), which catalyzes the formation of peptide bonds, thereby polymerizing the amino acids delivered by tRNAs into a polypeptide chain. The nascent polypeptides leave the ribosome through a tunnel in the LSU and interact with protein factors that function in enzymatic processing, targeting, and the membrane insertion of nascent chains at the exit of the ribosomal tunnel. In Lysiphlebus testaceipes (Greenbugs aphid parastoid), this protein is Large ribosomal subunit protein uL18 (RpL5).